A 186-amino-acid polypeptide reads, in one-letter code: Peptidyl-tRNA hydrolase (186 aa).

Tyr-16 contacts tRNA. Residue His-21 is the Proton acceptor of the active site. TRNA is bound by residues Tyr-66, Asn-68, and Asn-114.

It belongs to the PTH family. As to quaternary structure, monomer.

The protein localises to the cytoplasm. It carries out the reaction an N-acyl-L-alpha-aminoacyl-tRNA + H2O = an N-acyl-L-amino acid + a tRNA + H(+). In terms of biological role, hydrolyzes ribosome-free peptidyl-tRNAs (with 1 or more amino acids incorporated), which drop off the ribosome during protein synthesis, or as a result of ribosome stalling. Its function is as follows. Catalyzes the release of premature peptidyl moieties from peptidyl-tRNA molecules trapped in stalled 50S ribosomal subunits, and thus maintains levels of free tRNAs and 50S ribosomes. The polypeptide is Peptidyl-tRNA hydrolase (Ureaplasma parvum serovar 3 (strain ATCC 700970)).